Reading from the N-terminus, the 144-residue chain is Large ribosomal subunit protein uL16 (144 aa).

This sequence belongs to the universal ribosomal protein uL16 family. In terms of assembly, part of the 50S ribosomal subunit.

Its function is as follows. Binds 23S rRNA and is also seen to make contacts with the A and possibly P site tRNAs. The chain is Large ribosomal subunit protein uL16 from Ligilactobacillus salivarius (strain UCC118) (Lactobacillus salivarius).